The primary structure comprises 417 residues: Gamma-glutamyl phosphate reductase (417 aa).

This sequence belongs to the gamma-glutamyl phosphate reductase family.

It localises to the cytoplasm. The catalysed reaction is L-glutamate 5-semialdehyde + phosphate + NADP(+) = L-glutamyl 5-phosphate + NADPH + H(+). It participates in amino-acid biosynthesis; L-proline biosynthesis; L-glutamate 5-semialdehyde from L-glutamate: step 2/2. Functionally, catalyzes the NADPH-dependent reduction of L-glutamate 5-phosphate into L-glutamate 5-semialdehyde and phosphate. The product spontaneously undergoes cyclization to form 1-pyrroline-5-carboxylate. This is Gamma-glutamyl phosphate reductase from Escherichia coli (strain 55989 / EAEC).